The following is a 395-amino-acid chain: MNQTWRAHLQCKLQQLHEQGQYRDLHVTEKAEETWLIRDKKRMLNLASNNYLGLAGDERLKEAAIACTKRYGTGATASRLVVGNHLLYEEVERSICDWKGTERALIVNSGYTANIGAISSLASRHDIVFSDKLNHASIVDGIILSGAEHKRYRHNDLDHLEKLLKMASPEKRKLIVTDTVFSMDGDTAYLRDLVQLKEKYGAIIIVDEAHASGIYGIGGAGLSHIEKNLSQKIDIHMGTFSKALGCYGAYLTGDEIYIEYLQNMMRSFIFTTALPPSTLGAVQKAIEIVKEDNERRENLIANGEYFRTKLRDAGFDIGNSSTHIVPIVVGSNEHALRFSKRLQEAGIAAIAIRPPTVPVHSSRIRFAVTSQHTIADLKWAIDRIIHIAKEEELFV.

Arg-23 contacts substrate. 110–111 is a pyridoxal 5'-phosphate binding site; it reads GY. His-135 is a substrate binding site. Pyridoxal 5'-phosphate contacts are provided by residues Ser-182, 207–210, and 239–242; these read DEAH and TFSK. N6-(pyridoxal phosphate)lysine is present on Lys-242. A substrate-binding site is contributed by Thr-356.

It belongs to the class-II pyridoxal-phosphate-dependent aminotransferase family. BioF subfamily. Homodimer. Requires pyridoxal 5'-phosphate as cofactor.

It carries out the reaction 6-carboxyhexanoyl-[ACP] + L-alanine + H(+) = (8S)-8-amino-7-oxononanoate + holo-[ACP] + CO2. The protein operates within cofactor biosynthesis; biotin biosynthesis. In terms of biological role, catalyzes the decarboxylative condensation of pimeloyl-[acyl-carrier protein] and L-alanine to produce 8-amino-7-oxononanoate (AON), [acyl-carrier protein], and carbon dioxide. This is Putative 8-amino-7-oxononanoate synthase (bioF) from Bacillus cereus (strain B4264).